Consider the following 408-residue polypeptide: tRNA pseudouridine synthase D (408 aa).

Catalysis depends on Asp76, which acts as the Nucleophile. The region spanning 149-362 is the TRUD domain; it reads GFINYYDSQR…NSFERKVRIL (214 aa).

Belongs to the pseudouridine synthase TruD family.

The catalysed reaction is uridine(13) in tRNA = pseudouridine(13) in tRNA. Its function is as follows. Responsible for synthesis of pseudouridine from uracil-13 in transfer RNAs. The sequence is that of tRNA pseudouridine synthase D from Leptospira interrogans serogroup Icterohaemorrhagiae serovar Lai (strain 56601).